The chain runs to 81 residues: Photosystem I iron-sulfur center (81 aa).

2 consecutive 4Fe-4S ferredoxin-type domains span residues 2–31 and 39–68; these read AHSV…MIPW and IASA…VRVY. [4Fe-4S] cluster-binding residues include cysteine 11, cysteine 14, cysteine 17, cysteine 21, cysteine 48, cysteine 51, cysteine 54, and cysteine 58.

In terms of assembly, the eukaryotic PSI reaction center is composed of at least 11 subunits. [4Fe-4S] cluster is required as a cofactor.

Its subcellular location is the plastid. The protein resides in the chloroplast thylakoid membrane. It catalyses the reaction reduced [plastocyanin] + hnu + oxidized [2Fe-2S]-[ferredoxin] = oxidized [plastocyanin] + reduced [2Fe-2S]-[ferredoxin]. Apoprotein for the two 4Fe-4S centers FA and FB of photosystem I (PSI); essential for photochemical activity. FB is the terminal electron acceptor of PSI, donating electrons to ferredoxin. The C-terminus interacts with PsaA/B/D and helps assemble the protein into the PSI complex. Required for binding of PsaD and PsaE to PSI. PSI is a plastocyanin-ferredoxin oxidoreductase, converting photonic excitation into a charge separation, which transfers an electron from the donor P700 chlorophyll pair to the spectroscopically characterized acceptors A0, A1, FX, FA and FB in turn. The sequence is that of Photosystem I iron-sulfur center from Zygnema circumcarinatum (Green alga).